A 337-amino-acid chain; its full sequence is Movement protein (337 aa).

The segment covering 1 to 11 (MAGLWRSNSTL) has biased composition (polar residues). 2 disordered regions span residues 1 to 24 (MAGL…QTET) and 273 to 337 (SVVR…VRQT).

Its subcellular location is the host cell junction. The protein resides in the host plasmodesma. Its function is as follows. Transports viral genome to neighboring plant cells directly through plasmosdesmata, without any budding. The movement protein allows efficient cell to cell propagation, by bypassing the host cell wall barrier. Acts by forming a tubular structure at the host plasmodesmata, enlarging it enough to allow free passage of virion capsids. This Olive latent virus 2 (isolate Italy) (OLV-2) protein is Movement protein.